The primary structure comprises 241 residues: Small ribosomal subunit protein uS2 (241 aa).

The protein belongs to the universal ribosomal protein uS2 family.

This chain is Small ribosomal subunit protein uS2, found in Klebsiella pneumoniae (strain 342).